The sequence spans 154 residues: uncharacterized protein (154 aa).

The N-terminal stretch at 1 to 33 (MTKRGIQAFAGGIILATAVLAAVFYLTDEDQAA) is a signal peptide.

This is an uncharacterized protein from Bacillus subtilis (strain 168).